A 313-amino-acid polypeptide reads, in one-letter code: Solute carrier family 35 member E3 (313 aa).

10 helical membrane passes run 17-37 (GLLLNLLVSICIVFLNKWIYV), 40-60 (GFPNMSLTLVHFVVTWLGLYV), 77-97 (LLLLALSFCGFVVFTNLSLQN), 100-120 (IGTYQLAKAMTTPVIIVIQTL), 130-147 (IRLTLIPITLGVILNSYY), 153-173 (FLGTVFAALGVLVTSLYQVWV), 187-206 (LLYYQAPMSSAMLLVAVPFF), 225-245 (LMVLLSGVIAFMVNLSIYWII), 252-272 (TYNMFGHFKFCITLFGGYVLF), and 275-295 (PLSINQGLGMLCTLFGILAYT).

This sequence belongs to the TPT transporter family. SLC35E subfamily.

Its subcellular location is the membrane. Its function is as follows. Putative transporter. In Bos taurus (Bovine), this protein is Solute carrier family 35 member E3 (SLC35E3).